Reading from the N-terminus, the 90-residue chain is uncharacterized protein (90 aa).

Residues 13–34 (APEGMGPHHAASSSHHSAQHHH) form a disordered region. The helical transmembrane segment at 52–72 (YKMWFLYALILALIFGVFMWW) threads the bilayer.

The protein localises to the host membrane. This is an uncharacterized protein from Invertebrate iridescent virus 3 (IIV-3).